The sequence spans 618 residues: Tyrosine-protein kinase ZAP-70 (618 aa).

An SH2 1 domain is found at 10–102 (FFYGSISRAE…GLPCNLRKPC (93 aa)). Residues 103–162 (NRPPGLEPQPGVFDCLRDAMVRDYVRQTWKLEGDALEQAIISQAPQVEKLIATTAHERMP) are interdomain A. In terms of domain architecture, SH2 2 spans 163–254 (WYHSSLTREE…GLIYRLKEVC (92 aa)). At tyrosine 248 the chain carries Phosphotyrosine. Residues 255-336 (PNSSASAAVA…KKLFLKRENL (82 aa)) form an interdomain B region. Residues 270–320 (AHPSTFTQPQRRVDTLNSDGYTPEPARLASSTDKPRPMPMDTSVYESPYSD) are disordered. Over residues 273–289 (STFTQPQRRVDTLNSDG) the composition is skewed to polar residues. Serine 287 carries the phosphoserine modification. Tyrosine 290 is modified (phosphotyrosine). The residue at position 314 (tyrosine 314) is a Phosphotyrosine; by LCK. The residue at position 318 (tyrosine 318) is a Phosphotyrosine. Residues 337–597 (LVADIELGCG…VEQRMRNYYY (261 aa)) form the Protein kinase domain. ATP contacts are provided by residues 343-351 (LGCGNFGSV) and lysine 368. Aspartate 460 serves as the catalytic Proton acceptor. 2 positions are modified to phosphotyrosine: tyrosine 491 and tyrosine 492. Lysine 543 is covalently cross-linked (Glycyl lysine isopeptide (Lys-Gly) (interchain with G-Cter in ubiquitin)).

It belongs to the protein kinase superfamily. Tyr protein kinase family. SYK/ZAP-70 subfamily. In terms of assembly, interacts with CD247/CD3Z; this interaction docks ZAP70 at the stimulated TCR. Interacts with NFAM1. Interacts with adapter protein SLA; this interaction negatively regulates T-cell receptor signaling. Interacts with VAV1. Interacts with CBL; this interaction promotes ubiquitination, internalization and subsequent degradation of CD247/CD3Z. Identified in a complex with CBL and UBE2L3. Interacts with SHB. Interacts with adapter protein SLA2; this interaction negatively regulates T-cell receptor signaling. Interacts with CBLB. Interacts (via SH2 domains) with RHOH; this interaction regulates ZAP70 subcellular localization. Interacts with DEF6. Interacts (ubiquitinated form) with OTUD7B and UBASH3B. In terms of processing, phosphorylated on tyrosine residues upon T-cell antigen receptor (TCR) stimulation. Phosphorylation of Tyr-314 and Tyr-314 are essential for ZAP70 positive function on T-lymphocyte activation whereas Tyr-290 has a negative regulatory role. Within the C-terminal kinase domain, Tyr-491 and Tyr-492 are phosphorylated after TCR induction, Tyr-491 playing a negative regulatory role and Tyr-492 a positive. Tyr-492 is dephosphorylated by PTN22. Post-translationally, ubiquitinated in response to T cell activation. Deubiquitinated by OTUD7B. Isoform 1 and isoform 2 are expressed in thymus, spleen and lymph nodes.

It is found in the cytoplasm. Its subcellular location is the cell membrane. The catalysed reaction is L-tyrosyl-[protein] + ATP = O-phospho-L-tyrosyl-[protein] + ADP + H(+). Activated by phosphorylation at Tyr-492 in the activation loop. In terms of biological role, tyrosine kinase that plays an essential role in regulation of the adaptive immune response. Regulates motility, adhesion and cytokine expression of mature T-cells, as well as thymocyte development. Also contributes to the development and activation of primary B-lymphocytes. When antigen presenting cells (APC) activate T-cell receptor (TCR), a serie of phosphorylations lead to the recruitment of ZAP70 to the doubly phosphorylated TCR component CD3Z through ITAM motif at the plasma membrane. This recruitment serves to localization to the stimulated TCR and to relieve its autoinhibited conformation. Release of ZAP70 active conformation is further stabilized by phosphorylation mediated by LCK. Subsequently, ZAP70 phosphorylates at least 2 essential adapter proteins: LAT and LCP2. In turn, a large number of signaling molecules are recruited and ultimately lead to lymphokine production, T-cell proliferation and differentiation. Furthermore, ZAP70 controls cytoskeleton modifications, adhesion and mobility of T-lymphocytes, thus ensuring correct delivery of effectors to the APC. ZAP70 is also required for TCR-CD3Z internalization and degradation through interaction with the E3 ubiquitin-protein ligase CBL and adapter proteins SLA and SLA2. Thus, ZAP70 regulates both T-cell activation switch on and switch off by modulating TCR expression at the T-cell surface. During thymocyte development, ZAP70 promotes survival and cell-cycle progression of developing thymocytes before positive selection (when cells are still CD4/CD8 double negative). Additionally, ZAP70-dependent signaling pathway may also contribute to primary B-cells formation and activation through B-cell receptor (BCR). The sequence is that of Tyrosine-protein kinase ZAP-70 (Zap70) from Mus musculus (Mouse).